The following is a 242-amino-acid chain: ATP-dependent dethiobiotin synthetase BioD (242 aa).

12–17 (EVGKTV) serves as a coordination point for ATP. Thr16 is a Mg(2+) binding site. Residue Lys37 is part of the active site. Residue Ser41 participates in substrate binding. Residues Asp51 and 112 to 115 (EGAG) each bind ATP. Residues Asp51 and Glu112 each coordinate Mg(2+).

It belongs to the dethiobiotin synthetase family. As to quaternary structure, homodimer. Mg(2+) serves as cofactor.

The protein resides in the cytoplasm. It carries out the reaction (7R,8S)-7,8-diammoniononanoate + CO2 + ATP = (4R,5S)-dethiobiotin + ADP + phosphate + 3 H(+). It functions in the pathway cofactor biosynthesis; biotin biosynthesis; biotin from 7,8-diaminononanoate: step 1/2. Its function is as follows. Catalyzes a mechanistically unusual reaction, the ATP-dependent insertion of CO2 between the N7 and N8 nitrogen atoms of 7,8-diaminopelargonic acid (DAPA, also called 7,8-diammoniononanoate) to form a ureido ring. The polypeptide is ATP-dependent dethiobiotin synthetase BioD (Bacillus cereus (strain G9842)).